We begin with the raw amino-acid sequence, 156 residues long: Ribonuclease pancreatic (156 aa).

Positions 1–28 are cleaved as a signal peptide; that stretch reads MALEKSLALLPLLVLVLLVLGWVQPSLG. Residues K35 and R38 each contribute to the substrate site. Residue H40 is the Proton acceptor of the active site. 4 disulfide bridges follow: C54/C112, C68/C123, C86/C138, and C93/C100. An N-linked (GlcNAc...) asparagine glycan is attached at N62. A substrate-binding site is contributed by 69-73; the sequence is KPVNT. N90 is a glycosylation site (N-linked (GlcNAc...) asparagine). Residues K94 and R113 each contribute to the substrate site. H147 serves as the catalytic Proton donor.

This sequence belongs to the pancreatic ribonuclease family. Monomer. Interacts with and forms tight 1:1 complexes with RNH1. Dimerization of two such complexes may occur. Interaction with RNH1 inhibits this protein.

The protein localises to the secreted. The catalysed reaction is an [RNA] containing cytidine + H2O = an [RNA]-3'-cytidine-3'-phosphate + a 5'-hydroxy-ribonucleotide-3'-[RNA].. The enzyme catalyses an [RNA] containing uridine + H2O = an [RNA]-3'-uridine-3'-phosphate + a 5'-hydroxy-ribonucleotide-3'-[RNA].. Its function is as follows. Endonuclease that catalyzes the cleavage of RNA on the 3' side of pyrimidine nucleotides. Acts on single-stranded and double-stranded RNA. This chain is Ribonuclease pancreatic (RNASE1), found in Lagothrix lagotricha (Brown woolly monkey).